Reading from the N-terminus, the 275-residue chain is MTLQQEIIQALGAKPHINPEEEIRRSVDFLKAYLKTYPFLKSLVLGISGGQDSTLAGKLSQMAIAELREETGDNALQFIAVRLPYGVQADEQDCQDAIAFIQPDRVLTVNIKGAVLASEQALREAGIELSDFVRGNEKARERMKAQYSIAGMTHGVVVGTDHAAEAITGFFTKYGDGGTDINPLHRLNKRQGKQLLAALGCPEHLYKKVPTADLEDDRPSLPDEAALGVTYDNIDDYLEGKTLDPAIAKTIEGWYVKTEHKRRLPITVFDDFWKR.

Residue 46 to 53 coordinates ATP; sequence GISGGQDS. Mg(2+) is bound at residue Asp52. Residue Arg140 coordinates deamido-NAD(+). An ATP-binding site is contributed by Thr160. A Mg(2+)-binding site is contributed by Glu165. Lys173 and Asp180 together coordinate deamido-NAD(+). Lys189 and Thr211 together coordinate ATP. 260–261 serves as a coordination point for deamido-NAD(+); the sequence is HK.

The protein belongs to the NAD synthetase family. Homodimer.

It catalyses the reaction deamido-NAD(+) + NH4(+) + ATP = AMP + diphosphate + NAD(+) + H(+). The protein operates within cofactor biosynthesis; NAD(+) biosynthesis; NAD(+) from deamido-NAD(+) (ammonia route): step 1/1. Catalyzes the ATP-dependent amidation of deamido-NAD to form NAD. Uses ammonia as a nitrogen source. In Salmonella choleraesuis (strain SC-B67), this protein is NH(3)-dependent NAD(+) synthetase.